We begin with the raw amino-acid sequence, 360 residues long: Heat-inducible transcription repressor HrcA (360 aa).

Belongs to the HrcA family.

Functionally, negative regulator of class I heat shock genes (grpE-dnaK-dnaJ and groELS operons). Prevents heat-shock induction of these operons. The chain is Heat-inducible transcription repressor HrcA from Gloeobacter violaceus (strain ATCC 29082 / PCC 7421).